Here is a 757-residue protein sequence, read N- to C-terminus: MAMARRSASRLLSSFRPFSLLLQPLDDAPSLSAAAAAASARRGMSSASALRARDEKEVARWRESMDRMRNIGISAHIDSGKTTLTERVLYYTGRIHEIHEVRGRDGVGAKMDSMDLEREKGITIQSAATYCTWNGYQVNIIDTPGHVDFTIEVERALRVLDGAILVLCSVGGVQSQSITVDRQMRRYEIPRVAFINKLDRMGADPWKVLNQARSKLRHHNAAVQVPIGLEEEFEGLVDLVELKAYKFEGGSGQNVVASDVPSNMQDLVMEKRRELIEVVSEVDDQLAEAFLNDEPIQANQLKAAIRRATVARKFIPVYMGSAFKNKGVQPLLDGVLDYLPCPMEVESYALDQNKSEEKVLLAGTPAEPLVALAFKLEEGRFGQLTYLRIYDGVIRKGDFIYNVNTGKKIKVPRLVRMHSNEMEDIQEAHAGQIVAVFGVDCASGDTFTDGSVKYTMTSMNVPEPVMSLAVSPISKDSGGQFSKALNRFQKEDPTFRVGLDPESGETIISGMGELHLDIYVERIRREYKVDAKVGKPRVNFRETITQRAEFDYLHKKQSGGQGQYGRVCGYIEPLPSESDGKFEFDNMIIGQAIPSNFIPAIEKGFKEACNSGSLIGHPVENIRIVLTDGASHAVDSSELAFKLASIYAFRQCYAAARPVILEPVMKVELKVPTEFQGTVTGDMNKRKGIIVGNDQEGDDTVVVCHVPLNNMFGYSTALRSMTQGKGEFSMEYLEHNTVSQDVQMQLVNTYKASRGTE.

In terms of domain architecture, tr-type G spans 66 to 344 (DRMRNIGISA…VLDYLPCPME (279 aa)). GTP is bound by residues 75 to 82 (AHIDSGKT), 142 to 146 (DTPGH), and 196 to 199 (NKLD).

It belongs to the TRAFAC class translation factor GTPase superfamily. Classic translation factor GTPase family. EF-G/EF-2 subfamily.

Its subcellular location is the mitochondrion. The protein operates within protein biosynthesis; polypeptide chain elongation. Functionally, mitochondrial GTPase that catalyzes the GTP-dependent ribosomal translocation step during translation elongation. During this step, the ribosome changes from the pre-translocational (PRE) to the post-translocational (POST) state as the newly formed A-site-bound peptidyl-tRNA and P-site-bound deacylated tRNA move to the P and E sites, respectively. Catalyzes the coordinated movement of the two tRNA molecules, the mRNA and conformational changes in the ribosome. This is Elongation factor G, mitochondrial from Oryza sativa subsp. japonica (Rice).